Consider the following 175-residue polypeptide: Disulfide bond formation protein B 2 (175 aa).

Over 1 to 9 (MYLARTRFL) the chain is Cytoplasmic. The helical transmembrane segment at 10-26 (FFLASLACASIIGTAFY) threads the bilayer. The Periplasmic segment spans residues 27 to 44 (LQQTFGLDPCFLCLIQRA). Residues cysteine 36 and cysteine 39 are joined by a disulfide bond. The helical transmembrane segment at 45–61 (AIIACGVLALCAACHAP) threads the bilayer. Residues 62–68 (GPTGMRR) are Cytoplasmic-facing. A helical transmembrane segment spans residues 69–85 (YSLGFLLIALTGLVTAG). At 86-142 (AQVWLQTASADQLIPFITKLEHLLSLLSLDMCIDRLRSDAMFCAEITWTLFGISLPE) the chain is on the periplasmic side. Residues 143 to 161 (WSLLAFTGLALLPLYPLFS) traverse the membrane as a helical segment. Over 162-175 (EFSHWLATKDRARY) the chain is Cytoplasmic.

Belongs to the DsbB family.

It is found in the cell inner membrane. In terms of biological role, required for disulfide bond formation in some periplasmic proteins. Acts by oxidizing the DsbA protein. The protein is Disulfide bond formation protein B 2 of Pseudomonas savastanoi pv. phaseolicola (strain 1448A / Race 6) (Pseudomonas syringae pv. phaseolicola (strain 1448A / Race 6)).